The sequence spans 415 residues: Translation initiation factor 2 subunit gamma (415 aa).

Residues 7–206 (QPEVNIGVVG…GIEEYIKTPY (200 aa)) enclose the tr-type G domain. A G1 region spans residues 16-23 (GHVDHGKT). Mg(2+)-binding residues include Asp-19, Thr-23, Gly-44, and Thr-46. 19–24 (DHGKTT) provides a ligand contact to GTP. Positions 44–48 (GMTIK) are G2. The Zn(2+) site is built by Cys-59, Cys-62, Cys-74, and Cys-77. Residues 93 to 96 (DAPG) are G3. GTP-binding positions include 149-152 (NKVD) and 184-186 (SAL). The G4 stretch occupies residues 149–152 (NKVD). Positions 184 to 186 (SAL) are G5.

This sequence belongs to the TRAFAC class translation factor GTPase superfamily. Classic translation factor GTPase family. EIF2G subfamily. In terms of assembly, heterotrimer composed of an alpha, a beta and a gamma chain. Mg(2+) serves as cofactor.

The enzyme catalyses GTP + H2O = GDP + phosphate + H(+). Functionally, eIF-2 functions in the early steps of protein synthesis by forming a ternary complex with GTP and initiator tRNA. This chain is Translation initiation factor 2 subunit gamma, found in Saccharolobus solfataricus (strain ATCC 35092 / DSM 1617 / JCM 11322 / P2) (Sulfolobus solfataricus).